The sequence spans 198 residues: Auxin-binding protein 1 (198 aa).

The N-terminal stretch at 1–33 is a signal peptide; that stretch reads MIVLSVGSASSSPIVVVFSVALLLFYFSETSLG. An intrachain disulfide couples cysteine 36 to cysteine 189. Zn(2+)-binding residues include histidine 92, histidine 94, and glutamate 98. Asparagine 130 is a glycosylation site (N-linked (GlcNAc...) asparagine). Position 141 (histidine 141) interacts with Zn(2+). The Prevents secretion from ER signature appears at 195–198; it reads KDEL.

As to quaternary structure, homodimer. May interact with the GPI-anchored plasma membrane protein SKU5 and its family members. Interacts with TMK1 (via extracellular domain). Glycosylated. Post-translationally, ubiquitinated by RMA2, leading to proteasomal degradation.

The protein localises to the endoplasmic reticulum lumen. The protein resides in the cell membrane. Its function is as follows. Auxin receptor that controls cell elongation and cell division. Involved in embryonic morphogenesis. Acts on the cell cycle, endocycle, cell plate formation, and cell expansion and contributes to the control of auxin-related gene expression. Controls root meristem size and mediates auxin responsiveness. Involved in activation of ROP GTPases in response to auxin and regulation of clathrin-mediated endocytosis in roots. Acts as a positive factor in clathrin recruitment to the plasma membrane, thereby promoting endocytosis. Upon auxin binding, restricts the internalization of PIN proteins by inhibiting clathrin-mediated endocytosis. Promotes auxin-triggered phosphorylation status modulation of RAF-like kinases (e.g. RAF20 and RAF24). Involved in the regulation of polar auxin transport. Behaves as a negative regulator of the SCF(TIR1/AFB) signaling pathway, protecting AUX/IAA repressors from degradation. Regulates the expression of cell wall remodeling genes via an SCF(TIR1/AFB)-dependent pathway. Involved in the modulation of hemicellulose xyloglucan structure. Required for rapid auxin-mediated re-orientation of microtubules to regulate cell elongation in roots and dark-grown hypocotyls as well as asymmetric growth during gravitropic responses. Involved in the shade avoidance response. Forms with TMK1 a cell surface auxin perception complex that activates ROP signaling pathways. ABP1 sensing of auxin is important for the ABP1-TMK1 complex formation. Interacts functionally with phytochrome to regulate growth. This is Auxin-binding protein 1 from Arabidopsis thaliana (Mouse-ear cress).